A 157-amino-acid chain; its full sequence is 2-C-methyl-D-erythritol 2,4-cyclodiphosphate synthase (157 aa).

2 residues coordinate a divalent metal cation: D8 and H10. 4-CDP-2-C-methyl-D-erythritol 2-phosphate is bound by residues 8-10 (DVH) and 34-35 (HS). H42 contacts a divalent metal cation. Residues 56–58 (DIG), 61–65 (FPDTD), 100–106 (AQAPKMA), 132–135 (TTTE), F139, and R142 contribute to the 4-CDP-2-C-methyl-D-erythritol 2-phosphate site.

The protein belongs to the IspF family. As to quaternary structure, homotrimer. It depends on a divalent metal cation as a cofactor.

The enzyme catalyses 4-CDP-2-C-methyl-D-erythritol 2-phosphate = 2-C-methyl-D-erythritol 2,4-cyclic diphosphate + CMP. It functions in the pathway isoprenoid biosynthesis; isopentenyl diphosphate biosynthesis via DXP pathway; isopentenyl diphosphate from 1-deoxy-D-xylulose 5-phosphate: step 4/6. In terms of biological role, involved in the biosynthesis of isopentenyl diphosphate (IPP) and dimethylallyl diphosphate (DMAPP), two major building blocks of isoprenoid compounds. Catalyzes the conversion of 4-diphosphocytidyl-2-C-methyl-D-erythritol 2-phosphate (CDP-ME2P) to 2-C-methyl-D-erythritol 2,4-cyclodiphosphate (ME-CPP) with a corresponding release of cytidine 5-monophosphate (CMP). This chain is 2-C-methyl-D-erythritol 2,4-cyclodiphosphate synthase, found in Stutzerimonas stutzeri (strain A1501) (Pseudomonas stutzeri).